The primary structure comprises 498 residues: ATP synthase subunit beta, chloroplastic (498 aa).

Residue 172–179 participates in ATP binding; it reads GGAGVGKT.

Belongs to the ATPase alpha/beta chains family. F-type ATPases have 2 components, CF(1) - the catalytic core - and CF(0) - the membrane proton channel. CF(1) has five subunits: alpha(3), beta(3), gamma(1), delta(1), epsilon(1). CF(0) has four main subunits: a(1), b(1), b'(1) and c(9-12).

It is found in the plastid. It localises to the chloroplast thylakoid membrane. It catalyses the reaction ATP + H2O + 4 H(+)(in) = ADP + phosphate + 5 H(+)(out). Produces ATP from ADP in the presence of a proton gradient across the membrane. The catalytic sites are hosted primarily by the beta subunits. In Solanum tuberosum (Potato), this protein is ATP synthase subunit beta, chloroplastic.